We begin with the raw amino-acid sequence, 196 residues long: Putative NADH dehydrogenase/NAD(P)H nitroreductase PXO_03909 (196 aa).

Belongs to the nitroreductase family. HadB/RutE subfamily. Requires FMN as cofactor.

This Xanthomonas oryzae pv. oryzae (strain PXO99A) protein is Putative NADH dehydrogenase/NAD(P)H nitroreductase PXO_03909.